A 292-amino-acid polypeptide reads, in one-letter code: Cbb3-type cytochrome c oxidase subunit CcoP (292 aa).

2 helical membrane-spanning segments follow: residues 11–31 and 62–82; these read FGLI…SSLI and VGWI…FFFG. 2 Cytochrome c domains span residues 116 to 195 and 205 to 288; these read ELVD…MAEI and QLID…QSLK. Heme c is bound by residues cysteine 129, cysteine 132, histidine 133, methionine 174, cysteine 219, cysteine 222, histidine 223, and methionine 264.

Belongs to the CcoP / FixP family. As to quaternary structure, component of the cbb3-type cytochrome c oxidase at least composed of CcoN, CcoO, CcoQ and CcoP. The cofactor is heme c.

It localises to the cell inner membrane. Its pathway is energy metabolism; oxidative phosphorylation. Its function is as follows. C-type cytochrome. Part of the cbb3-type cytochrome c oxidase complex. CcoP subunit is required for transferring electrons from donor cytochrome c via its heme groups to CcoO subunit. From there, electrons are shuttled to the catalytic binuclear center of CcoN subunit where oxygen reduction takes place. The complex also functions as a proton pump. In Helicobacter pylori (Campylobacter pylori), this protein is Cbb3-type cytochrome c oxidase subunit CcoP.